The sequence spans 31 residues: LysM-domain containing protein (31 aa).

The stretch at 1 to 28 (YSPSLTDLQSYNAMNGPALKAGDILAVP) is one LysM 1 repeat.

The chain is LysM-domain containing protein from Jatropha curcas (Barbados nut).